We begin with the raw amino-acid sequence, 335 residues long: Pyridoxal 5'-phosphate synthase subunit PdxS (335 aa).

Aspartate 59 contacts D-ribose 5-phosphate. Lysine 116 serves as the catalytic Schiff-base intermediate with D-ribose 5-phosphate. Glycine 188 lines the D-ribose 5-phosphate pocket. Lysine 200 is a binding site for D-glyceraldehyde 3-phosphate. Residues glycine 253 and 274 to 275 (GS) contribute to the D-ribose 5-phosphate site.

Belongs to the PdxS/SNZ family. In terms of assembly, in the presence of PdxT, forms a dodecamer of heterodimers.

It catalyses the reaction aldehydo-D-ribose 5-phosphate + D-glyceraldehyde 3-phosphate + L-glutamine = pyridoxal 5'-phosphate + L-glutamate + phosphate + 3 H2O + H(+). Its pathway is cofactor biosynthesis; pyridoxal 5'-phosphate biosynthesis. Its function is as follows. Catalyzes the formation of pyridoxal 5'-phosphate from ribose 5-phosphate (RBP), glyceraldehyde 3-phosphate (G3P) and ammonia. The ammonia is provided by the PdxT subunit. Can also use ribulose 5-phosphate and dihydroxyacetone phosphate as substrates, resulting from enzyme-catalyzed isomerization of RBP and G3P, respectively. The sequence is that of Pyridoxal 5'-phosphate synthase subunit PdxS from Hyperthermus butylicus (strain DSM 5456 / JCM 9403 / PLM1-5).